Reading from the N-terminus, the 634-residue chain is Threonine--tRNA ligase (634 aa).

The tract at residues 1 to 142 (MQLLLIHSDY…LSRSIRPEGA (142 aa)) is editing domain. Positions 214–513 (PHVELMRRLE…TEEGKVPMLP (300 aa)) are catalytic. C306, H358, and H482 together coordinate Zn(2+).

Belongs to the class-II aminoacyl-tRNA synthetase family. As to quaternary structure, homodimer. The cofactor is Zn(2+).

The protein localises to the cytoplasm. The catalysed reaction is tRNA(Thr) + L-threonine + ATP = L-threonyl-tRNA(Thr) + AMP + diphosphate + H(+). In terms of biological role, catalyzes the attachment of threonine to tRNA(Thr) in a two-step reaction: L-threonine is first activated by ATP to form Thr-AMP and then transferred to the acceptor end of tRNA(Thr). Edits incorrectly charged L-seryl-tRNA(Thr) probably via its editing domain (tested with total bovine tRNA). Activates L-serine, but does not detectably transfer it to tRNA (tested with total bovine tRNA). The sequence is that of Threonine--tRNA ligase from Methanosarcina mazei (strain ATCC BAA-159 / DSM 3647 / Goe1 / Go1 / JCM 11833 / OCM 88) (Methanosarcina frisia).